We begin with the raw amino-acid sequence, 163 residues long: Phosphopantetheine adenylyltransferase (163 aa).

Substrate is bound at residue serine 11. Residues 11 to 12 (SF) and histidine 19 contribute to the ATP site. 3 residues coordinate substrate: lysine 43, leucine 75, and arginine 89. ATP-binding positions include 90–92 (GLR), glutamate 100, and 125–131 (YSFLSSS).

The protein belongs to the bacterial CoaD family. As to quaternary structure, homohexamer. It depends on Mg(2+) as a cofactor.

It is found in the cytoplasm. The enzyme catalyses (R)-4'-phosphopantetheine + ATP + H(+) = 3'-dephospho-CoA + diphosphate. It functions in the pathway cofactor biosynthesis; coenzyme A biosynthesis; CoA from (R)-pantothenate: step 4/5. Functionally, reversibly transfers an adenylyl group from ATP to 4'-phosphopantetheine, yielding dephospho-CoA (dPCoA) and pyrophosphate. The sequence is that of Phosphopantetheine adenylyltransferase from Lysinibacillus sphaericus (strain C3-41).